We begin with the raw amino-acid sequence, 637 residues long: Biosynthetic arginine decarboxylase (637 aa).

Residue Lys-101 is modified to N6-(pyridoxal phosphate)lysine. Substrate is bound at residue 286–296; the sequence is FDVGGGLAVDY.

The protein belongs to the Orn/Lys/Arg decarboxylase class-II family. SpeA subfamily. Requires Mg(2+) as cofactor. The cofactor is pyridoxal 5'-phosphate.

It carries out the reaction L-arginine + H(+) = agmatine + CO2. It functions in the pathway amine and polyamine biosynthesis; agmatine biosynthesis; agmatine from L-arginine: step 1/1. In terms of biological role, catalyzes the biosynthesis of agmatine from arginine. The protein is Biosynthetic arginine decarboxylase of Shewanella baltica (strain OS223).